The primary structure comprises 451 residues: Ribosomal protein uS12 methylthiotransferase RimO (451 aa).

Residues Pro-17–Pro-127 form the MTTase N-terminal domain. Residues Cys-26, Cys-62, Cys-91, Cys-160, Cys-164, and Cys-167 each coordinate [4Fe-4S] cluster. Residues Leu-146–Glu-383 enclose the Radical SAM core domain. The 66-residue stretch at Lys-386–Val-451 folds into the TRAM domain.

The protein belongs to the methylthiotransferase family. RimO subfamily. [4Fe-4S] cluster is required as a cofactor.

Its subcellular location is the cytoplasm. It catalyses the reaction L-aspartate(89)-[ribosomal protein uS12]-hydrogen + (sulfur carrier)-SH + AH2 + 2 S-adenosyl-L-methionine = 3-methylsulfanyl-L-aspartate(89)-[ribosomal protein uS12]-hydrogen + (sulfur carrier)-H + 5'-deoxyadenosine + L-methionine + A + S-adenosyl-L-homocysteine + 2 H(+). In terms of biological role, catalyzes the methylthiolation of an aspartic acid residue of ribosomal protein uS12. This chain is Ribosomal protein uS12 methylthiotransferase RimO, found in Cellvibrio japonicus (strain Ueda107) (Pseudomonas fluorescens subsp. cellulosa).